The chain runs to 505 residues: Maturase K (505 aa).

The protein belongs to the intron maturase 2 family. MatK subfamily.

It localises to the plastid. The protein localises to the chloroplast. In terms of biological role, usually encoded in the trnK tRNA gene intron. Probably assists in splicing its own and other chloroplast group II introns. This is Maturase K from Barclaya longifolia (Orchid lily).